Here is a 273-residue protein sequence, read N- to C-terminus: Petrobactin import ATP-binding protein FpuD (273 aa).

Positions 5–241 (LETKRLTLSY…KLVRDVFRME (237 aa)) constitute an ABC transporter domain. 37 to 44 (GSNGCGKS) provides a ligand contact to ATP.

It belongs to the ABC transporter superfamily. In terms of assembly, the complex is composed of two ATP-binding proteins (FpuD), two transmembrane proteins (FpuB) and a solute-binding protein (FpuA).

It is found in the cell membrane. It catalyses the reaction a Fe(III)-siderophore(out) + ATP + H2O = a Fe(III)-siderophore(in) + ADP + phosphate + H(+). Part of an ABC transporter complex involved in ferric-petrobactin uptake. Probably responsible for energy coupling to the transport system. The chain is Petrobactin import ATP-binding protein FpuD from Bacillus anthracis.